A 426-amino-acid chain; its full sequence is UDP-N-acetylmuramoylalanine--D-glutamate ligase (426 aa).

112-118 contacts ATP; that stretch reads GSVGKST.

It belongs to the MurCDEF family.

The protein localises to the cytoplasm. It carries out the reaction UDP-N-acetyl-alpha-D-muramoyl-L-alanine + D-glutamate + ATP = UDP-N-acetyl-alpha-D-muramoyl-L-alanyl-D-glutamate + ADP + phosphate + H(+). It functions in the pathway cell wall biogenesis; peptidoglycan biosynthesis. Its function is as follows. Cell wall formation. Catalyzes the addition of glutamate to the nucleotide precursor UDP-N-acetylmuramoyl-L-alanine (UMA). The chain is UDP-N-acetylmuramoylalanine--D-glutamate ligase from Thermosipho melanesiensis (strain DSM 12029 / CIP 104789 / BI429).